The primary structure comprises 354 residues: Kelch domain-containing protein 8B (354 aa).

8 Kelch repeats span residues 1-31 (MATG…FQDG), 32-79 (HLLV…VLGK), 81-127 (VLVV…ERDG), 128-175 (MVYA…LHGN), 176-222 (KIYV…MAEG), 224-281 (VFSL…SLGD), 282-329 (HVVA…QAGP), and 331-354 (LFAI…RDGV).

The protein localises to the cytoplasm. The protein resides in the midbody. Functionally, involved in pinching off the separated nuclei at the cleavage furrow and in cytokinesis. Required for mitotic integrity and maintenance of chromosomal stability. Protects cells against mitotic errors, centrosomal amplification, micronucleus formation and aneuploidy. Plays a key role of midbody function involving abscission of the daughter cells during cytokinesis and appropriate chromosomal and nuclear segregation into the daughter cells. The protein is Kelch domain-containing protein 8B (KLHDC8B) of Bos taurus (Bovine).